Reading from the N-terminus, the 355-residue chain is Cell surface glycoprotein CD200 receptor 1 (355 aa).

Residues 1 to 26 form the signal peptide; that stretch reads MPCTWITSDLQLRLILTLFFVAECLS. Residues 27-267 are Extracellular-facing; that stretch reads AGMEGTKTSN…QGAEIPAHLK (241 aa). Positions 35-55 are enriched in polar residues; the sequence is SNNSMQQLDNGNHSSVSTTSS. Positions 35–56 are disordered; sequence SNNSMQQLDNGNHSSVSTTSST. N-linked (GlcNAc...) asparagine glycans are attached at residues Asn-46, Asn-123, and Asn-153. 4 disulfides stabilise this stretch: Cys-85-Cys-156, Cys-108-Cys-124, Cys-191-Cys-241, and Cys-210-Cys-229. In terms of domain architecture, Ig-like C2-type spans 139-257; the sequence is PALQVDPVAI…GNKSLSIQLS (119 aa). Residues 268 to 288 form a helical membrane-spanning segment; that stretch reads NLYITAPIFIILIVVGSIWLL. Topologically, residues 289-355 are cytoplasmic; that stretch reads KISGCRKCKL…NLHTIYVPRV (67 aa).

This sequence belongs to the CD200R family. In terms of assembly, CD200 and CD200R1 interact via their respective N-terminal Ig-like domains.

The protein localises to the cell membrane. Its function is as follows. Inhibitory receptor for the CD200/OX2 cell surface glycoprotein. Limits inflammation by inhibiting the expression of pro-inflammatory molecules including TNF-alpha, interferons, and inducible nitric oxide synthase (iNOS) in response to selected stimuli. This is Cell surface glycoprotein CD200 receptor 1 (CD200R1) from Bos taurus (Bovine).